A 417-amino-acid chain; its full sequence is Probable glucuronosyltransferase Os01g0926700 (417 aa).

Topologically, residues 1–3 (MRR) are cytoplasmic. The chain crosses the membrane as a helical; Signal-anchor for type II membrane protein span at residues 4–24 (WVLAIAILAAAVCFFLGAQAQ). The Lumenal portion of the chain corresponds to 25–417 (EVRQGHQTER…AGPVGDLKPW (393 aa)). N-linked (GlcNAc...) asparagine glycans are attached at residues Asn144 and Asn405.

The protein belongs to the glycosyltransferase 47 family.

It is found in the golgi apparatus membrane. In terms of biological role, involved in the synthesis of glucuronoxylan hemicellulose in secondary cell walls. The chain is Probable glucuronosyltransferase Os01g0926700 from Oryza sativa subsp. japonica (Rice).